A 152-amino-acid polypeptide reads, in one-letter code: Large ribosomal subunit protein uL13 (152 aa).

Belongs to the universal ribosomal protein uL13 family. Part of the 50S ribosomal subunit.

Functionally, this protein is one of the early assembly proteins of the 50S ribosomal subunit, although it is not seen to bind rRNA by itself. It is important during the early stages of 50S assembly. This Wolbachia pipientis wMel protein is Large ribosomal subunit protein uL13.